The following is a 625-amino-acid chain: Threonine--tRNA ligase (625 aa).

The editing domain stretch occupies residues 1 to 147 (MRILLIHSDY…TIVPGEAKKE (147 aa)). The tract at residues 206-505 (PHVKIMLEQE…MKKGKKPMYP (300 aa)) is catalytic. 3 residues coordinate Zn(2+): cysteine 298, histidine 350, and histidine 474.

The protein belongs to the class-II aminoacyl-tRNA synthetase family. Homodimer. Zn(2+) serves as cofactor.

Its subcellular location is the cytoplasm. It carries out the reaction tRNA(Thr) + L-threonine + ATP = L-threonyl-tRNA(Thr) + AMP + diphosphate + H(+). Catalyzes the attachment of threonine to tRNA(Thr) in a two-step reaction: L-threonine is first activated by ATP to form Thr-AMP and then transferred to the acceptor end of tRNA(Thr). Also edits incorrectly charged L-seryl-tRNA(Thr). This is Threonine--tRNA ligase from Thermococcus sibiricus (strain DSM 12597 / MM 739).